A 475-amino-acid polypeptide reads, in one-letter code: Dihydrolipoyl dehydrogenase (475 aa).

Residues 36–45 (ERYSTLGGVC), Lys-54, and Gly-117 each bind FAD. Cys-45 and Cys-50 form a disulfide bridge. NAD(+) contacts are provided by residues 182–186 (GGGII), Glu-205, Val-238, and 270–273 (AIGR). Asp-313 and Ala-321 together coordinate FAD. His-445 serves as the catalytic Proton acceptor.

The protein belongs to the class-I pyridine nucleotide-disulfide oxidoreductase family. FAD is required as a cofactor.

The protein localises to the cytoplasm. It catalyses the reaction N(6)-[(R)-dihydrolipoyl]-L-lysyl-[protein] + NAD(+) = N(6)-[(R)-lipoyl]-L-lysyl-[protein] + NADH + H(+). The branched-chain alpha-keto dehydrogenase complex catalyzes the overall conversion of alpha-keto acids to acyl-CoA and CO(2). It contains multiple copies of 3 enzymatic components: branched-chain alpha-keto acid decarboxylase (E1), lipoamide acyltransferase (E2) and lipoamide dehydrogenase (E3). The sequence is that of Dihydrolipoyl dehydrogenase (lpd) from Vibrio parahaemolyticus serotype O3:K6 (strain RIMD 2210633).